Here is a 61-residue protein sequence, read N- to C-terminus: Conotoxin Bt5.1 (61 aa).

Residues 1 to 22 (MRGLPVFVILLLLIASEPSVDA) form the signal peptide. A propeptide spanning residues 23 to 48 (RPKTKADVPLTSLNDNAKRTLQILRN) is cleaved from the precursor.

The protein belongs to the conotoxin T superfamily. In terms of processing, contains 2 disulfide bonds that can be either 'C1-C3, C2-C4' or 'C1-C4, C2-C3', since these disulfide connectivities have been observed for conotoxins with cysteine framework V (for examples, see AC P0DQQ7 and AC P81755). Expressed by the venom duct.

It is found in the secreted. The chain is Conotoxin Bt5.1 from Conus betulinus (Beech cone).